The chain runs to 269 residues: Undecaprenyl-diphosphatase (269 aa).

8 helical membrane passes run 1 to 21 (MDIMHAAVLGILQGLTEILPI), 40 to 59 (GLTFDVGLHVGTLIALCVYF), 87 to 107 (FFIIAGTVPAAIAGKTLEKPI), 117 to 137 (LIALLLIAFGLLLALADTTGP), 147 to 166 (LRGALLIGLAQCLALIPGVS), 188 to 208 (FSFLLSLPIVAGAGILKMGEL), 220 to 240 (PLLAGMATSAVSGYLGVALLL), and 248 to 268 (LYPFVWYRLLAGGAVLAYLFA).

This sequence belongs to the UppP family.

It is found in the cell inner membrane. The catalysed reaction is di-trans,octa-cis-undecaprenyl diphosphate + H2O = di-trans,octa-cis-undecaprenyl phosphate + phosphate + H(+). Catalyzes the dephosphorylation of undecaprenyl diphosphate (UPP). Confers resistance to bacitracin. This is Undecaprenyl-diphosphatase from Geobacter sulfurreducens (strain ATCC 51573 / DSM 12127 / PCA).